The following is a 686-amino-acid chain: Methionine--tRNA ligase (686 aa).

The short motif at 15–25 (PYANGSIHLGH) is the 'HIGH' region element. The Zn(2+) site is built by cysteine 146, cysteine 149, cysteine 159, and cysteine 162. The short motif at 332 to 336 (KMSKS) is the 'KMSKS' region element. Residue lysine 335 coordinates ATP. In terms of domain architecture, tRNA-binding spans 585–686 (AFAAVDMRIA…EGAQPGMRVM (102 aa)).

This sequence belongs to the class-I aminoacyl-tRNA synthetase family. MetG type 1 subfamily. Homodimer. The cofactor is Zn(2+).

It localises to the cytoplasm. It carries out the reaction tRNA(Met) + L-methionine + ATP = L-methionyl-tRNA(Met) + AMP + diphosphate. In terms of biological role, is required not only for elongation of protein synthesis but also for the initiation of all mRNA translation through initiator tRNA(fMet) aminoacylation. The chain is Methionine--tRNA ligase from Vibrio campbellii (strain ATCC BAA-1116).